The chain runs to 376 residues: 2-hydroxypropyl-CoM lyase (376 aa).

Residues His218, Cys220, and Cys341 each coordinate Zn(2+).

The protein belongs to the vitamin-B12 independent methionine synthase family. Homohexamer. Component I of the aliphatic epoxide carboxylation complex together with components II, III and IV. Requires Zn(2+) as cofactor.

The enzyme catalyses (R)-2-hydroxypropyl-coenzyme M = (R)-1,2-epoxypropane + coenzyme M. It catalyses the reaction (S)-2-hydroxypropyl-coenzyme M = (S)-1,2-epoxypropane + coenzyme M. It participates in alkene metabolism; propylene degradation. Inhibited by methylepoxypropane. Inhibited by the zinc chelator 4-(2-pyridylazo)resorcinol (PAR), in the presence of p- (hydroxymercuri)benzenesulfonic acid (PMPS), and by EDTA. Not inhibited by the coenzyme M analog 2-bromoethanesulfonate (BES). In terms of biological role, involved in aliphatic epoxide carboxylation. Catalyzes the addition of coenzyme M (CoM) to either R- or S-epoxypropane to form the thioether conjugate 2-hydroxypropyl-CoM. Catalyzes the reaction of CoM with R-epoxypropane at a rate approximately twice of that with S-epoxypropane. The CoM analogs 2-mercaptopropionate, 2-mercaptoethanol and cysteine substitute poorly for CoM as the thiol substrate. The chain is 2-hydroxypropyl-CoM lyase from Xanthobacter autotrophicus (strain ATCC BAA-1158 / Py2).